A 349-amino-acid chain; its full sequence is Divinyl chlorophyll a/b light-harvesting protein PcbE (349 aa).

A run of 6 helical transmembrane segments spans residues 27 to 47 (FIAAHIAHTGLIAFAAGGSTL), 65 to 85 (IFLAHLASIGIGFDEAGAWTG), 88 to 108 (VASIAIVHLVLSMVYGAGGLL), 201 to 221 (VLGGHAFLAFLEITGGAFHIA), 241 to 261 (AILSFSCAGLGWMAVVAAFWC), and 308 to 328 (LANVHYYFGFFFLQGHLWHAL).

Belongs to the PsbB/PsbC family. IsiA/Pcb subfamily. As to quaternary structure, the antenna complex consists of divinyl chlorophylls (a and b) and divinyl chlorophyll a/b binding proteins and binds more divinyl chlorophyll b than does the antenna complex from high-light-adapted Prochlorococcus. Divinyl chlorophyll a serves as cofactor. Requires divinyl chlorophyll b as cofactor.

It is found in the cellular thylakoid membrane. In terms of biological role, the antenna complex functions as a light receptor, it captures and delivers excitation energy to photosystems II and I. The Prochlorales pcb genes are not related to higher plant LHCs. This Prochlorococcus marinus (strain NATL2A) protein is Divinyl chlorophyll a/b light-harvesting protein PcbE (pcbE).